Here is a 448-residue protein sequence, read N- to C-terminus: Cytoplasmic tRNA 2-thiolation protein 2 (448 aa).

The protein belongs to the CTU2/NCS2 family.

The protein resides in the cytoplasm. The protein operates within tRNA modification; 5-methoxycarbonylmethyl-2-thiouridine-tRNA biosynthesis. Its function is as follows. Plays a central role in 2-thiolation of mcm(5)S(2)U at tRNA wobble positions of tRNA(Lys), tRNA(Glu) and tRNA(Gln). May act by forming a heterodimer with NCS6 that ligates sulfur from thiocarboxylated URM1 onto the uridine of tRNAs at wobble position. Prior mcm(5) tRNA modification by the elongator complex is required for 2-thiolation. May also be involved in protein urmylation. In Scheffersomyces stipitis (strain ATCC 58785 / CBS 6054 / NBRC 10063 / NRRL Y-11545) (Yeast), this protein is Cytoplasmic tRNA 2-thiolation protein 2.